The sequence spans 431 residues: MSEIVDIYAREILDSRGNPTLECEVFLESGAFGRAAVPSGASTGEREALELRDGDKGRYLGKGVLQAVDNVNNRIADELIGMEASDQVGIDQRMLEMDGTEFKSNLGANAILGVSLAVAKAAAEEAGLPLYKYIGGANARELPLPMMNIINGGAHADNNVDIQEFMIMPAGACCFAEALRMGAEIFHALKGVLKAKGYNTAVGDEGGFAPNLKSNEEALEVIMEAIVKAGYKPGDDVLLALDVASSELFDKEKGIYTLENEAQKEKTPAQMVDFYENLVNKYPIISIEDGMAENDWDGWKLMTDRLGKKIQIVGDDLFVTNPKILKEGIQKGIANSILIKLNQIGTLTETLEAIEMAKRAGYTTVISHRSGETEDTTLADLAVAVNAGQIKTGSLCRTDRVAKYNQLLRIEDELDTTAEFKGHNVFYNIKK.

Residue Gln-163 coordinates (2R)-2-phosphoglycerate. Glu-205 (proton donor) is an active-site residue. 3 residues coordinate Mg(2+): Asp-242, Glu-288, and Asp-315. Residues Lys-340, Arg-369, Ser-370, and Lys-391 each coordinate (2R)-2-phosphoglycerate. Lys-340 acts as the Proton acceptor in catalysis.

This sequence belongs to the enolase family. The cofactor is Mg(2+).

Its subcellular location is the cytoplasm. It localises to the secreted. It is found in the cell surface. It catalyses the reaction (2R)-2-phosphoglycerate = phosphoenolpyruvate + H2O. The protein operates within carbohydrate degradation; glycolysis; pyruvate from D-glyceraldehyde 3-phosphate: step 4/5. In terms of biological role, catalyzes the reversible conversion of 2-phosphoglycerate (2-PG) into phosphoenolpyruvate (PEP). It is essential for the degradation of carbohydrates via glycolysis. The chain is Enolase from Trichlorobacter lovleyi (strain ATCC BAA-1151 / DSM 17278 / SZ) (Geobacter lovleyi).